A 141-amino-acid chain; its full sequence is ATP synthase epsilon chain (141 aa).

This sequence belongs to the ATPase epsilon chain family. In terms of assembly, F-type ATPases have 2 components, CF(1) - the catalytic core - and CF(0) - the membrane proton channel. CF(1) has five subunits: alpha(3), beta(3), gamma(1), delta(1), epsilon(1). CF(0) has three main subunits: a, b and c.

It localises to the cell inner membrane. Produces ATP from ADP in the presence of a proton gradient across the membrane. The protein is ATP synthase epsilon chain of Pseudomonas fluorescens (strain ATCC BAA-477 / NRRL B-23932 / Pf-5).